Here is a 433-residue protein sequence, read N- to C-terminus: Glutamate-1-semialdehyde 2,1-aminomutase (433 aa).

N6-(pyridoxal phosphate)lysine is present on Lys273.

This sequence belongs to the class-III pyridoxal-phosphate-dependent aminotransferase family. HemL subfamily. In terms of assembly, homodimer. The cofactor is pyridoxal 5'-phosphate.

The protein resides in the cytoplasm. The enzyme catalyses (S)-4-amino-5-oxopentanoate = 5-aminolevulinate. It functions in the pathway porphyrin-containing compound metabolism; protoporphyrin-IX biosynthesis; 5-aminolevulinate from L-glutamyl-tRNA(Glu): step 2/2. Its pathway is porphyrin-containing compound metabolism; chlorophyll biosynthesis. The sequence is that of Glutamate-1-semialdehyde 2,1-aminomutase (hemL) from Synechocystis sp. (strain ATCC 27184 / PCC 6803 / Kazusa).